The following is a 366-amino-acid chain: Ribosomal RNA large subunit methyltransferase M (366 aa).

Residues Ser-188, Cys-221–Gly-224, Asp-240, Asp-260, and Asp-277 each bind S-adenosyl-L-methionine. Residue Lys-306 is the Proton acceptor of the active site.

It belongs to the class I-like SAM-binding methyltransferase superfamily. RNA methyltransferase RlmE family. RlmM subfamily. In terms of assembly, monomer.

The protein localises to the cytoplasm. The catalysed reaction is cytidine(2498) in 23S rRNA + S-adenosyl-L-methionine = 2'-O-methylcytidine(2498) in 23S rRNA + S-adenosyl-L-homocysteine + H(+). In terms of biological role, catalyzes the 2'-O-methylation at nucleotide C2498 in 23S rRNA. The sequence is that of Ribosomal RNA large subunit methyltransferase M from Salmonella arizonae (strain ATCC BAA-731 / CDC346-86 / RSK2980).